A 48-amino-acid polypeptide reads, in one-letter code: Protein TUNAR (48 aa).

The interval 1 to 20 (MVITSENDEDRGGQEKESKE) is disordered. The segment covering 10–20 (DRGGQEKESKE) has biased composition (basic and acidic residues). The chain crosses the membrane as a helical span at residues 24-44 (LAMLGIIGTILNLIVIIFVYI).

In terms of assembly, interacts with ATPase ATP2A2/SERCA2. Interacts with ATPase ATP2A3/SERCA3; the interaction occurs at low levels in low glucose conditions and is increased by high glucose levels. As to expression, highly expressed in pancreatic islets where it is enriched in the insulin-producing beta cells.

The protein localises to the endoplasmic reticulum membrane. The protein resides in the extracellular vesicle membrane. In terms of biological role, in neurons, plays a role in the regulation of intracellular Ca(2+), possibly by acting as an activator of ATP2A2/SERCA2, thus increasing the efficiency with which Ca(2+) is removed from the cytoplasm. Inhibits differentiation of embryonic stem cells into neurons and inhibits neurite outgrowth, likely as a result of its role in intracellular Ca(2+) regulation. In pancreatic beta cells, lowers Ca(2+) levels in the endoplasmic reticulum and enhances glucose-stimulated insulin secretion. This chain is Protein TUNAR, found in Homo sapiens (Human).